A 506-amino-acid polypeptide reads, in one-letter code: Maturase K (506 aa).

Belongs to the intron maturase 2 family. MatK subfamily.

Its subcellular location is the plastid. It localises to the chloroplast. In terms of biological role, usually encoded in the trnK tRNA gene intron. Probably assists in splicing its own and other chloroplast group II introns. The sequence is that of Maturase K from Lathyrus sativus (White vetchling).